The sequence spans 216 residues: Homologous-pairing protein 2 (216 aa).

It belongs to the HOP2 family. As to quaternary structure, interacts with mcp7.

Its subcellular location is the nucleus. Required for proper homologous pairing and efficient cross-over and intragenic recombination during meiosis. Acts indirectly in a process facilitating homologous recombination. Acts during mid- to late-horse-tail period. The chain is Homologous-pairing protein 2 (meu13) from Schizosaccharomyces pombe (strain 972 / ATCC 24843) (Fission yeast).